Reading from the N-terminus, the 189-residue chain is Probable nicotinate-nucleotide adenylyltransferase (189 aa).

The protein belongs to the NadD family.

The enzyme catalyses nicotinate beta-D-ribonucleotide + ATP + H(+) = deamido-NAD(+) + diphosphate. Its pathway is cofactor biosynthesis; NAD(+) biosynthesis; deamido-NAD(+) from nicotinate D-ribonucleotide: step 1/1. Catalyzes the reversible adenylation of nicotinate mononucleotide (NaMN) to nicotinic acid adenine dinucleotide (NaAD). The sequence is that of Probable nicotinate-nucleotide adenylyltransferase from Bacillus pumilus (strain SAFR-032).